The chain runs to 60 residues: UPF0509 protein ESA_01586 (60 aa).

It belongs to the UPF0509 family.

The polypeptide is UPF0509 protein ESA_01586 (Cronobacter sakazakii (strain ATCC BAA-894) (Enterobacter sakazakii)).